The chain runs to 233 residues: Gamma-glutamyl-hercynylcysteine sulfoxide hydrolase (233 aa).

Cys-2 serves as the catalytic Nucleophile. The region spanning 2–233 (CRHLGWLGAQ…TALDRAKGPR (232 aa)) is the Glutamine amidotransferase type-2 domain.

The enzyme catalyses gamma-L-glutamyl-hercynylcysteine S-oxide + H2O = S-(hercyn-2-yl)-L-cysteine S-oxide + L-glutamate. It participates in amino-acid biosynthesis; ergothioneine biosynthesis. Functionally, catalyzes the hydrolysis of the gamma-glutamyl amide bond of hercynyl-gamma-L-glutamyl-L-cysteine sulfoxide to produce hercynylcysteine sulfoxide, a step in the biosynthesis pathway of ergothioneine. Ergothioneine is an antioxidant that protects mycobacteria from oxidative stress. The polypeptide is Gamma-glutamyl-hercynylcysteine sulfoxide hydrolase (egtC) (Mycobacterium tuberculosis (strain ATCC 25618 / H37Rv)).